The chain runs to 221 residues: Iron-sulfur cluster repair protein YtfE (221 aa).

It belongs to the RIC family. YtfE subfamily. As to quaternary structure, homodimer.

The protein localises to the cytoplasm. Its function is as follows. Di-iron-containing protein involved in the repair of iron-sulfur clusters damaged by oxidative and nitrosative stress conditions. The chain is Iron-sulfur cluster repair protein YtfE from Yersinia pseudotuberculosis serotype IB (strain PB1/+).